A 279-amino-acid chain; its full sequence is Proteasome subunit alpha type-1 (279 aa).

Phosphotyrosine is present on tyrosine 103. A compositionally biased stretch (basic and acidic residues) spans 235–249 (HVAIAKENDNDTPRN). The tract at residues 235-279 (HVAIAKENDNDTPRNDDDDDRPSPPEEPAAGPRDPEVLVATEQRP) is disordered.

Belongs to the peptidase T1A family. As to quaternary structure, the 26S proteasome consists of a 20S proteasome core and two 19S regulatory subunits. The 20S proteasome core is composed of 28 subunits that are arranged in four stacked rings, resulting in a barrel-shaped structure. The two end rings are each formed by seven alpha subunits, and the two central rings are each formed by seven beta subunits. The catalytic chamber with the active sites is on the inside of the barrel. Interacts with PI31.

The protein resides in the cytoplasm. Its subcellular location is the nucleus. In terms of biological role, the proteasome is a multicatalytic proteinase complex which is characterized by its ability to cleave peptides with Arg, Phe, Tyr, Leu, and Glu adjacent to the leaving group at neutral or slightly basic pH. The proteasome has an ATP-dependent proteolytic activity. This Drosophila melanogaster (Fruit fly) protein is Proteasome subunit alpha type-1 (Prosalpha6).